Consider the following 545-residue polypeptide: CTP synthase (545 aa).

Residues 1 to 266 form an amidoligase domain region; that stretch reads MTTNYIFVTG…DDYICKRFSL (266 aa). Residue serine 14 participates in CTP binding. A UTP-binding site is contributed by serine 14. ATP is bound by residues 15–20 and aspartate 72; that span reads SLGKGI. Residues aspartate 72 and glutamate 140 each coordinate Mg(2+). CTP is bound by residues 147-149, 187-192, and lysine 223; these read DIE and KTKPTQ. UTP contacts are provided by residues 187-192 and lysine 223; that span reads KTKPTQ. 239–241 is an ATP binding site; the sequence is KDV. The Glutamine amidotransferase type-1 domain occupies 291-542; it reads TIGMVGKYIE…VKAASEHQKR (252 aa). L-glutamine is bound at residue glycine 352. Cysteine 379 serves as the catalytic Nucleophile; for glutamine hydrolysis. Residues 380-383, glutamate 403, and arginine 470 each bind L-glutamine; that span reads LGMQ. Catalysis depends on residues histidine 515 and glutamate 517.

This sequence belongs to the CTP synthase family. In terms of assembly, homotetramer.

The catalysed reaction is UTP + L-glutamine + ATP + H2O = CTP + L-glutamate + ADP + phosphate + 2 H(+). It catalyses the reaction L-glutamine + H2O = L-glutamate + NH4(+). It carries out the reaction UTP + NH4(+) + ATP = CTP + ADP + phosphate + 2 H(+). The protein operates within pyrimidine metabolism; CTP biosynthesis via de novo pathway; CTP from UDP: step 2/2. Its activity is regulated as follows. Allosterically activated by GTP, when glutamine is the substrate; GTP has no effect on the reaction when ammonia is the substrate. The allosteric effector GTP functions by stabilizing the protein conformation that binds the tetrahedral intermediate(s) formed during glutamine hydrolysis. Inhibited by the product CTP, via allosteric rather than competitive inhibition. In terms of biological role, catalyzes the ATP-dependent amination of UTP to CTP with either L-glutamine or ammonia as the source of nitrogen. Regulates intracellular CTP levels through interactions with the four ribonucleotide triphosphates. In Salmonella arizonae (strain ATCC BAA-731 / CDC346-86 / RSK2980), this protein is CTP synthase.